The chain runs to 305 residues: Ribosomal protein L11 methyltransferase (305 aa).

Positions 152, 173, 195, and 237 each coordinate S-adenosyl-L-methionine.

Belongs to the methyltransferase superfamily. PrmA family.

It is found in the cytoplasm. It catalyses the reaction L-lysyl-[protein] + 3 S-adenosyl-L-methionine = N(6),N(6),N(6)-trimethyl-L-lysyl-[protein] + 3 S-adenosyl-L-homocysteine + 3 H(+). Its function is as follows. Methylates ribosomal protein L11. In Hamiltonella defensa subsp. Acyrthosiphon pisum (strain 5AT), this protein is Ribosomal protein L11 methyltransferase.